Here is a 294-residue protein sequence, read N- to C-terminus: UDP-3-O-acyl-N-acetylglucosamine deacetylase (294 aa).

His75, His232, and Asp236 together coordinate Zn(2+). The active-site Proton donor is the His259.

This sequence belongs to the LpxC family. Requires Zn(2+) as cofactor.

It catalyses the reaction a UDP-3-O-[(3R)-3-hydroxyacyl]-N-acetyl-alpha-D-glucosamine + H2O = a UDP-3-O-[(3R)-3-hydroxyacyl]-alpha-D-glucosamine + acetate. It functions in the pathway glycolipid biosynthesis; lipid IV(A) biosynthesis; lipid IV(A) from (3R)-3-hydroxytetradecanoyl-[acyl-carrier-protein] and UDP-N-acetyl-alpha-D-glucosamine: step 2/6. Functionally, catalyzes the hydrolysis of UDP-3-O-myristoyl-N-acetylglucosamine to form UDP-3-O-myristoylglucosamine and acetate, the committed step in lipid A biosynthesis. This is UDP-3-O-acyl-N-acetylglucosamine deacetylase from Campylobacter jejuni subsp. doylei (strain ATCC BAA-1458 / RM4099 / 269.97).